Consider the following 284-residue polypeptide: Pantothenate synthetase (284 aa).

30–37 (MGNLHDGH) contributes to the ATP binding site. Histidine 37 serves as the catalytic Proton donor. Glutamine 61 contributes to the (R)-pantoate binding site. Glutamine 61 contributes to the beta-alanine binding site. 149 to 152 (GEKD) lines the ATP pocket. A (R)-pantoate-binding site is contributed by glutamine 155. ATP-binding positions include isoleucine 178 and 186 to 189 (LSSR).

This sequence belongs to the pantothenate synthetase family. In terms of assembly, homodimer.

It localises to the cytoplasm. It catalyses the reaction (R)-pantoate + beta-alanine + ATP = (R)-pantothenate + AMP + diphosphate + H(+). Its pathway is cofactor biosynthesis; (R)-pantothenate biosynthesis; (R)-pantothenate from (R)-pantoate and beta-alanine: step 1/1. Functionally, catalyzes the condensation of pantoate with beta-alanine in an ATP-dependent reaction via a pantoyl-adenylate intermediate. In Salmonella choleraesuis (strain SC-B67), this protein is Pantothenate synthetase.